We begin with the raw amino-acid sequence, 571 residues long: Carboxylesterase 3 (571 aa).

The N-terminal stretch at 1–26 (MERAVRVESGVLVGVVCLLLACPATA) is a signal peptide. A disulfide bond links cysteine 97 and cysteine 124. The N-linked (GlcNAc...) asparagine glycan is linked to asparagine 105. Serine 229 (acyl-ester intermediate) is an active-site residue. Cysteine 281 and cysteine 292 are oxidised to a cystine. Active-site charge relay system residues include glutamate 347 and histidine 460. The Prevents secretion from ER motif lies at 568-571 (QEDL).

The protein belongs to the type-B carboxylesterase/lipase family. N-glycosylated. Expressed in liver, colon and small intestine.

The protein resides in the endoplasmic reticulum lumen. It carries out the reaction a carboxylic ester + H2O = an alcohol + a carboxylate + H(+). Involved in the detoxification of xenobiotics and in the activation of ester and amide prodrugs. Shows low catalytic efficiency for hydrolysis of CPT-11 (7-ethyl-10-[4-(1-piperidino)-1-piperidino]-carbonyloxycamptothecin), a prodrug for camptothecin used in cancer therapeutics. This chain is Carboxylesterase 3 (CES3), found in Homo sapiens (Human).